A 164-amino-acid chain; its full sequence is Protein-export protein SecB (164 aa).

This sequence belongs to the SecB family. In terms of assembly, homotetramer, a dimer of dimers. One homotetramer interacts with 1 SecA dimer.

It localises to the cytoplasm. Functionally, one of the proteins required for the normal export of preproteins out of the cell cytoplasm. It is a molecular chaperone that binds to a subset of precursor proteins, maintaining them in a translocation-competent state. It also specifically binds to its receptor SecA. The chain is Protein-export protein SecB from Chromohalobacter salexigens (strain ATCC BAA-138 / DSM 3043 / CIP 106854 / NCIMB 13768 / 1H11).